Here is an 852-residue protein sequence, read N- to C-terminus: Leucine--tRNA ligase (852 aa).

The 'HIGH' region motif lies at P41–H51. The 'KMSKS' region signature appears at K623–S627. Residue K626 participates in ATP binding.

This sequence belongs to the class-I aminoacyl-tRNA synthetase family.

The protein localises to the cytoplasm. It carries out the reaction tRNA(Leu) + L-leucine + ATP = L-leucyl-tRNA(Leu) + AMP + diphosphate. In Ruegeria pomeroyi (strain ATCC 700808 / DSM 15171 / DSS-3) (Silicibacter pomeroyi), this protein is Leucine--tRNA ligase.